A 240-amino-acid chain; its full sequence is MKAGYFITGTDTGVGKTIVTSAILRSFIKKGLKVGAMKVIETGCLNKDGILLPSDGMLLRDMAEMNDSLDLITPIKLENPLSPLVASRIEEIEVDIERIFRAFETLQKKYDYLLVEGVGGLMVPLNKEEKKKSMFYFVRDLIKDMGLPVILVTRPTLGTINHTLLTLEALKNKKISVKGYIINFSEPAKNDIAEKTNPQVLKELVDVPCLGILPYLTELNKDKIGETAIKNFDIEALISL.

An ATP-binding site is contributed by G13–I18. Residue T17 coordinates Mg(2+). K38 is an active-site residue. T42 serves as a coordination point for substrate. ATP contacts are provided by residues D55, E116–G119, and P214–L216. Mg(2+) contacts are provided by D55 and E116.

The protein belongs to the dethiobiotin synthetase family. In terms of assembly, homodimer. It depends on Mg(2+) as a cofactor.

The protein resides in the cytoplasm. It carries out the reaction (7R,8S)-7,8-diammoniononanoate + CO2 + ATP = (4R,5S)-dethiobiotin + ADP + phosphate + 3 H(+). The protein operates within cofactor biosynthesis; biotin biosynthesis; biotin from 7,8-diaminononanoate: step 1/2. Catalyzes a mechanistically unusual reaction, the ATP-dependent insertion of CO2 between the N7 and N8 nitrogen atoms of 7,8-diaminopelargonic acid (DAPA, also called 7,8-diammoniononanoate) to form a ureido ring. This Thermodesulfovibrio yellowstonii (strain ATCC 51303 / DSM 11347 / YP87) protein is ATP-dependent dethiobiotin synthetase BioD.